The chain runs to 265 residues: Hydroxyethylthiazole kinase (265 aa).

Residue M50 participates in substrate binding. R125 and T171 together coordinate ATP. G198 is a substrate binding site.

It belongs to the Thz kinase family. Mg(2+) is required as a cofactor.

The catalysed reaction is 5-(2-hydroxyethyl)-4-methylthiazole + ATP = 4-methyl-5-(2-phosphooxyethyl)-thiazole + ADP + H(+). It functions in the pathway cofactor biosynthesis; thiamine diphosphate biosynthesis; 4-methyl-5-(2-phosphoethyl)-thiazole from 5-(2-hydroxyethyl)-4-methylthiazole: step 1/1. In terms of biological role, catalyzes the phosphorylation of the hydroxyl group of 4-methyl-5-beta-hydroxyethylthiazole (THZ). The sequence is that of Hydroxyethylthiazole kinase from Cronobacter sakazakii (strain ATCC BAA-894) (Enterobacter sakazakii).